The chain runs to 731 residues: 1,4-alpha-glucan branching enzyme GlgB 2 (731 aa).

The active-site Nucleophile is D410. The Proton donor role is filled by E463.

Belongs to the glycosyl hydrolase 13 family. GlgB subfamily. In terms of assembly, monomer.

The catalysed reaction is Transfers a segment of a (1-&gt;4)-alpha-D-glucan chain to a primary hydroxy group in a similar glucan chain.. The protein operates within glycan biosynthesis; glycogen biosynthesis. Functionally, catalyzes the formation of the alpha-1,6-glucosidic linkages in glycogen by scission of a 1,4-alpha-linked oligosaccharide from growing alpha-1,4-glucan chains and the subsequent attachment of the oligosaccharide to the alpha-1,6 position. The polypeptide is 1,4-alpha-glucan branching enzyme GlgB 2 (Xanthomonas oryzae pv. oryzae (strain MAFF 311018)).